We begin with the raw amino-acid sequence, 367 residues long: Alanine racemase (367 aa).

K40 functions as the Proton acceptor; specific for D-alanine in the catalytic mechanism. N6-(pyridoxal phosphate)lysine is present on K40. R136 provides a ligand contact to substrate. The active-site Proton acceptor; specific for L-alanine is the Y263. M310 contacts substrate.

Belongs to the alanine racemase family. The cofactor is pyridoxal 5'-phosphate.

The enzyme catalyses L-alanine = D-alanine. It functions in the pathway amino-acid biosynthesis; D-alanine biosynthesis; D-alanine from L-alanine: step 1/1. In terms of biological role, catalyzes the interconversion of L-alanine and D-alanine. May also act on other amino acids. The chain is Alanine racemase (alr) from Streptococcus pneumoniae (strain Taiwan19F-14).